The primary structure comprises 470 residues: Nuclear receptor ROR-beta (470 aa).

A DNA-binding region (nuclear receptor) is located at residues 18–93 (VIPCKICGDK…LGMSRDAVKF (76 aa)). NR C4-type zinc fingers lie at residues 21–41 (CKIC…CEGC) and 57–81 (CPRQ…LQKC). The span at 104–117 (LYAEVQKHQQRLQE) shows a compositional bias: basic and acidic residues. The segment at 104–127 (LYAEVQKHQQRLQEQRQQQSGEAE) is disordered. The region spanning 222–460 (EIDRIAQNII…TLFPPLYKEL (239 aa)) is the NR LBD domain. Positions 456–461 (LYKELF) match the AF-2 motif.

Belongs to the nuclear hormone receptor family. NR1 subfamily. Monomer. Interacts with CRX. Expressed in inner and outer neuroblastic layer as well as in the ganglion cell layer of the developing retina. Expressed in bone marrow osteoprogenitor cells.

The protein resides in the nucleus. It localises to the nucleoplasm. Nuclear receptor that binds DNA as a monomer to ROR response elements (RORE) containing a single core motif half-site 5'-AGGTCA-3' preceded by a short A-T-rich sequence. Considered to have intrinsic transcriptional activity, have some natural ligands such as all-trans retinoic acid (ATRA) and other retinoids which act as inverse agonists repressing the transcriptional activity. Required for normal postnatal development of rod and cone photoreceptor cells. Modulates rod photoreceptors differentiation at least by inducing the transcription factor NRL-mediated pathway. In cone photoreceptor cells, regulates transcription of OPN1SW. Involved in the regulation of the period length and stability of the circadian rhythm. May control cytoarchitectural patterning of neocortical neurons during development. May act in a dose-dependent manner to regulate barrel formation upon innervation of layer IV neurons by thalamocortical axons. May play a role in the suppression of osteoblastic differentiation through the inhibition of RUNX2 transcriptional activity. In terms of biological role, isoform 1 is critical for hindlimb motor control and for the differentiation of amacrine and horizontal cells in the retina. Regulates the expression of PTF1A synergistically with FOXN4. The sequence is that of Nuclear receptor ROR-beta (Rorb) from Mus musculus (Mouse).